Consider the following 1132-residue polypeptide: Eisosome protein SEG2 (1132 aa).

Over residues 76–95 (KRTSSLPNQGHKNTSNNSAG) the composition is skewed to polar residues. Disordered regions lie at residues 76–142 (KRTS…GNSG) and 171–225 (RYSL…NDYH). Residues 101–113 (AHEDAETTFREFG) show a composition bias toward basic and acidic residues. Residues 115-142 (KQSSKVLNISSSTGQNSKSRTTSLGNSG) are compositionally biased toward polar residues. At S137 the chain carries Phosphoserine. Basic and acidic residues predominate over residues 208–225 (GSQEKKSESGGKSKNDYH). Residue S280 is modified to Phosphoserine. Residues 404-429 (PTLSEPKPAYVPPEDVEKEPSTLSNQ) are disordered. Phosphoserine occurs at positions 504 and 507. Disordered stretches follow at residues 510 to 938 (GGNQ…FRSM) and 961 to 993 (EKKEKGGHVSRKSWTFGLPSPLKRRTSHSTHTT). K526 is covalently cross-linked (Glycyl lysine isopeptide (Lys-Gly) (interchain with G-Cter in ubiquitin)). Composition is skewed to acidic residues over residues 550–561 (DQEEALSDNEPE) and 595–644 (KDDD…DDEY). Phosphoserine is present on S556. 2 stretches are compositionally biased toward polar residues: residues 688–699 (SENAEVSQSGTN) and 710–735 (YLTNTSSDTFSLDSENVNSKSSTDTT). Residue K743 forms a Glycyl lysine isopeptide (Lys-Gly) (interchain with G-Cter in ubiquitin) linkage. The span at 761 to 773 (SSTSSSIYSIETS) shows a compositional bias: low complexity. 2 stretches are compositionally biased toward polar residues: residues 774–810 (PNIDSSTGKTASNTKTNSHGPPTSISKQKYDQSSSHQ) and 827–845 (NRSCLRTLRGSSNEATLSH). Low complexity predominate over residues 850 to 860 (PASDSSSSPPY). Residues 916-930 (PPARKSSFEKERPAK) show a composition bias toward basic and acidic residues. Phosphoserine is present on residues S980 and S1022.

It belongs to the SEG1 family. In terms of assembly, component of eisosomes, large cytoplasmic protein assemblies that localize to specialized domains termed MCCs on the plasma membrane.

The protein localises to the cell membrane. Its function is as follows. Likely plays only a minor role in eisosome assembly. The chain is Eisosome protein SEG2 (SEG2) from Saccharomyces cerevisiae (strain ATCC 204508 / S288c) (Baker's yeast).